The sequence spans 460 residues: UDP-N-acetylmuramate--L-alanine ligase (460 aa).

119–125 (GSHGKTT) contacts ATP.

Belongs to the MurCDEF family.

It is found in the cytoplasm. It carries out the reaction UDP-N-acetyl-alpha-D-muramate + L-alanine + ATP = UDP-N-acetyl-alpha-D-muramoyl-L-alanine + ADP + phosphate + H(+). The protein operates within cell wall biogenesis; peptidoglycan biosynthesis. In terms of biological role, cell wall formation. The sequence is that of UDP-N-acetylmuramate--L-alanine ligase from Alkaliphilus metalliredigens (strain QYMF).